A 126-amino-acid chain; its full sequence is 14 kDa phosphohistidine phosphatase (126 aa).

Lys22 contacts substrate. The active-site Proton acceptor is His54. Position 95–97 (Ser95–Gly97) interacts with substrate.

This sequence belongs to the janus family. As to quaternary structure, monomer.

The protein resides in the cytoplasm. It carries out the reaction N(pros)-phospho-L-histidyl-[protein] + H2O = L-histidyl-[protein] + phosphate. The catalysed reaction is N(tele)-phospho-L-histidyl-[protein] + H2O = L-histidyl-[protein] + phosphate. Functionally, exhibits phosphohistidine phosphatase activity. In Sus scrofa (Pig), this protein is 14 kDa phosphohistidine phosphatase (PHPT1).